The chain runs to 370 residues: Metalloproteinase (370 aa).

Positions 1-15 are cleaved as a signal peptide; that stretch reads MYLAYIFFLFATVSA. One can recognise a Peptidase M12B domain in the interval 170 to 370; that stretch reads IVIEVLLVTD…DNYGKIFRMF (201 aa). An N-linked (GalNAc...) asparagine glycan is attached at Asn226. Residue His320 coordinates Zn(2+). Glu321 is a catalytic residue. 2 residues coordinate Zn(2+): His324 and His330.

The protein belongs to the venom metalloproteinase (M12B) family. Expressed by the venom gland.

It localises to the secreted. Its function is as follows. Metalloprotease that may disrupt the cell matrix and the process of clotting blood or hemolymph. This is Metalloproteinase from Tityus obscurus (Amazonian scorpion).